The primary structure comprises 648 residues: Solute carrier family 23 member 2 (648 aa).

A disordered region spans residues 1 to 21 (MMGIGKNTASKSVEAGGSTEG). Topologically, residues 9–110 (ASKSVEAGGS…LCIFLGLQHY (102 aa)) are cytoplasmic. Ser-70 carries the phosphoserine modification. Thr-75 bears the Phosphothreonine mark. Ser-78 is modified (phosphoserine). Phosphothreonine is present on Thr-79. Ser-81 is modified (phosphoserine). Residues 111-131 (LTCFSGTIAVPFLLADAMCVG) form a helical membrane-spanning segment. Residues 132–139 (DDQWATSQ) lie on the Extracellular side of the membrane. Residues 140-160 (LIGTIFFCVGITTLLQTTFGC) traverse the membrane as a helical segment. Position 161 (Arg-161) is a topological domain, cytoplasmic. A helical transmembrane segment spans residues 162–182 (LPLFQASAFAFLAPARAILSL). Topologically, residues 183 to 216 (DKWKCNTTEITVANGTAELLEHIWHPRIQEIQGA) are extracellular. Residues Asn-188 and Asn-196 are each glycosylated (N-linked (GlcNAc...) asparagine). A helical membrane pass occupies residues 217-237 (IIMSSLIEVVIGLLGLPGALL). Residues 238–264 (RYIGPLTITPTVALIGLSGFQAAGERA) lie on the Cytoplasmic side of the membrane. Residues 265-282 (GKHWGIAMLTIFLVLLFS) traverse the membrane as a helical segment. Over 283-286 (QYAR) the chain is Extracellular. An intramembrane region (helical) is located at residues 287 to 300 (NVKFPLPIYKSKKG). The Extracellular segment spans residues 301–307 (WTAYKFQ). Residues 308–328 (LFKMFPIILAILVSWLLCFIF) form a helical membrane-spanning segment. The Cytoplasmic segment spans residues 329–369 (TVTDVFPSNSTDYGYYARTDARKGVLLVAPWFKVPYPFQWG). Residues 370–390 (MPTVSAAGVIGMLSAVVASII) form a helical membrane-spanning segment. Residues 391 to 415 (ESIGDYYACARLSCAPPPPIHAINR) lie on the Extracellular side of the membrane. The chain crosses the membrane as a helical span at residues 416-436 (GIFVEGLSCVLDGIFGTGNGS). The Cytoplasmic segment spans residues 437–459 (TSSSPNIGVLGITKVGSRRVIQY). A helical transmembrane segment spans residues 460-480 (GAALMLGLGMVGKFSALFASL). Over 481 to 483 (PDP) the chain is Extracellular. A helical transmembrane segment spans residues 484–504 (VLGALFCTLFGMITAVGLSNL). Residues 505-514 (QFIDLNSSRN) lie on the Cytoplasmic side of the membrane. The helical transmembrane segment at 515 to 535 (LFVLGFSIFFGLVLPSYLRQN) threads the bilayer. Over 536–545 (PLVTGITGID) the chain is Extracellular. A helical transmembrane segment spans residues 546–566 (QILNVLLTTAMFVGGCVAFIL). At 567–648 (DNTIPGTPEE…SSDKDSQATV (82 aa)) the chain is on the cytoplasmic side. A Phosphothreonine modification is found at Thr-647.

It belongs to the nucleobase:cation symporter-2 (NCS2) (TC 2.A.40) family. In terms of assembly, interacts with CLSTN3. In terms of processing, phosphorylated. As to expression, expressed in metabolically active and specialized tissues, including high expression in brain and adrenals. Detected in a wide range of tissues. Expression in kidney is almost undetectable.

The protein resides in the cell membrane. The enzyme catalyses L-ascorbate(out) + 2 Na(+)(out) = L-ascorbate(in) + 2 Na(+)(in). Its function is as follows. Sodium/ascorbate cotransporter. Mediates electrogenic uptake of vitamin C, with a stoichiometry of 2 Na(+) for each ascorbate. The polypeptide is Solute carrier family 23 member 2 (Slc23a2) (Mus musculus (Mouse)).